An 857-amino-acid polypeptide reads, in one-letter code: MTRRRVLSVVVLLAALACRLGAQTPEQPAPPATTVQPTATRQQTSFPFRVCELSSHGDLFRFSSDIQCPSFGTRENHTEGLLMVFKDNIIPYSFKVRSYTKIVTNILIYNGWYADSVTNRHEEKFSVDSYETDQMDTIYQCYNAVKMTKDGLTRVYVDRDGVNITVNLKPTGGLANGVRRYASQTELYDAPGWLIWTYRTRTTVNCLITDMMAKSNSPFDFFVTTTGQTVEMSPFYDGKNKETFHERADSFHVRTNYKIVDYDNRGTNPQGERRAFLDKGTYTLSWKLENRTAYCPLQHWQTFDSTIATETGKSIHFVTDEGTSSFVTNTTVGIELPDAFKCIEEQVNKTMHEKYEAVQDRYTKGQEAITYFITSGGLLLAWLPLTPRSLATVKNLTELTTPTSSPPSSPSPPAPSAARGSTPAAVLRRRRRDAGNATTPVPPTAPGKSLGTLNNPATVQIQFAYDSLRRQINRMLGDLARAWCLEQKRQNMVLRELTKINPTTVMSSIYGKAVAAKRLGDVISVSQCVPVNQATVTLRKSMRVPGSETMCYSRPLVSFSFINDTKTYEGQLGTDNEIFLTKKMTEVCQATSQYYFQSGNEIHVYNDYHHFKTIELDGIATLQTFISLNTSLIENIDFASLELYSRDEQRASNVFDLEGIFREYNFQAQNIAGLRKDLDNAVSNGRNQFVDGLGELMDSLGSVGQSITNLVSTVGGLFSSLVSGFISFFKNPFGGMLILVLVAGVVILVISLTRRTRQMSQQPVQMLYPGIDELAQQHASGEGPGINPISKTELQAIMLALHEQNQEQKRAAQRAAGPSVASRALQAARDRFPGLRRRRYHDPETAAALLGEAETEF.

A signal peptide spans 1–21; sequence MTRRRVLSVVVLLAALACRLG. The Virion surface portion of the chain corresponds to 22–732; that stretch reads AQTPEQPAPP…SGFISFFKNP (711 aa). Cystine bridges form between C51–C528, C68–C484, C141–C206, C295–C342, and C551–C588. N76 carries an N-linked (GlcNAc...) asparagine; by host glycan. The interval 108–114 is involved in fusion and/or binding to host membrane; sequence IYNGWYA. N163 carries N-linked (GlcNAc...) asparagine; by host glycosylation. Positions 192 to 200 are involved in fusion and/or binding to host membrane; that stretch reads GWLIWTYRT. Residues N290, N329, N348, and N395 are each glycosylated (N-linked (GlcNAc...) asparagine; by host). The interval 398–453 is disordered; that stretch reads ELTTPTSSPPSSPSPPAPSAARGSTPAAVLRRRRRDAGNATTPVPPTAPGKSLGTL. A compositionally biased stretch (pro residues) spans 404–415; that stretch reads SSPPSSPSPPAP. The span at 416-425 shows a compositional bias: low complexity; sequence SAARGSTPAA. 3 N-linked (GlcNAc...) asparagine; by host glycosylation sites follow: N436, N563, and N629. The tract at residues 561-620 is oligomerization; that stretch reads FINDTKTYEGQLGTDNEIFLTKKMTEVCQATSQYYFQSGNEIHVYNDYHHFKTIELDGIA. Hydrophobic membrane proximal region regions lie at residues 678-730 and 709-729; these read LDNA…SFFK and NLVS…ISFF. A helical transmembrane segment spans residues 733-753; sequence FGGMLILVLVAGVVILVISLT. Residues 754-857 are Intravirion-facing; it reads RRTRQMSQQP…ALLGEAETEF (104 aa). The segment at 832–857 is disordered; the sequence is FPGLRRRRYHDPETAAALLGEAETEF. The segment covering 845-857 has biased composition (low complexity); it reads TAAALLGEAETEF.

This sequence belongs to the herpesviridae glycoprotein B family. Homotrimer; disulfide-linked. Binds to heparan sulfate proteoglycans. Interacts with gH/gL heterodimer. A proteolytic cleavage by host furin generates two subunits that remain linked by disulfide bonds.

It is found in the virion membrane. The protein resides in the host cell membrane. It localises to the host endosome membrane. Its subcellular location is the host Golgi apparatus membrane. Functionally, envelope glycoprotein that forms spikes at the surface of virion envelope. Essential for the initial attachment to heparan sulfate moieties of the host cell surface proteoglycans. Involved in fusion of viral and cellular membranes leading to virus entry into the host cell. Following initial binding to its host receptors, membrane fusion is mediated by the fusion machinery composed at least of gB and the heterodimer gH/gL. May be involved in the fusion between the virion envelope and the outer nuclear membrane during virion egress. The protein is Envelope glycoprotein B of Epstein-Barr virus (strain B95-8) (HHV-4).